A 621-amino-acid chain; its full sequence is MBT domain-containing protein 1 (621 aa).

Basic and acidic residues predominate over residues 1-21; sequence MEKTKDPADRSSRSERKRRDS. The disordered stretch occupies residues 1–55; that stretch reads MEKTKDPADRSSRSERKRRDSFGMFDGYDSCSEDTSSSSSSDESEEEVAPLPSSL. The span at 29 to 41 shows a compositional bias: low complexity; that stretch reads DSCSEDTSSSSSS. The FCS-type zinc-finger motif lies at 68–103; that stretch reads PDGKSGMATCEMCGMVGVRDAFYSKTKRFCSVSCSR. Residues Cys-77, Cys-80, Cys-97, and Cys-101 each coordinate Zn(2+). 4 MBT repeats span residues 164–268, 276–373, 374–479, and 487–583; these read FSWG…LVPP, TNWK…IGHR, FKRT…LTPP, and FKWF…LQPP. The disordered stretch occupies residues 581–621; it reads QPPAPQSNKDGQSNVSKQKKKSKSQPYKGHKKNFRKPGNRP. The segment covering 597 to 621 has biased composition (basic residues); the sequence is KQKKKSKSQPYKGHKKNFRKPGNRP.

Monomer. Component of the NuA4 histone acetyltransferase complex.

Its subcellular location is the nucleus. The protein resides in the chromosome. Functionally, chromatin reader component of the NuA4 histone acetyltransferase complex, a multiprotein complex involved in transcriptional activation of select genes principally by acetylation of nucleosomal histones H4 and H2A. The NuA4 complex plays a direct role in repair of DNA double-strand breaks (DSBs) by promoting homologous recombination (HR). MBTD1 specifically recognizes and binds monomethylated and dimethylated 'Lys-20' on histone H4 (H4K20me1 and H4K20me2, respectively). In the NuA4 complex, MBTD1 promotes recruitment of the complex to H4K20me marks by competing with TP53BP1 for binding to H4K20me. Following recruitment to H4K20me at DNA breaks, the NuA4 complex catalyzes acetylation of 'Lys-15' on histone H2A (H2AK15), blocking the ubiquitination mark required for TP53BP1 localization at DNA breaks, thereby promoting homologous recombination (HR). The polypeptide is MBT domain-containing protein 1 (Xenopus laevis (African clawed frog)).